The sequence spans 431 residues: STE20-related kinase adapter protein alpha (431 aa).

Phosphoserine occurs at positions 2 and 46. The Protein kinase domain maps to 69–379; the sequence is YELLTVIGKG…ASTLLNHSFF (311 aa). The tract at residues 310 to 347 is disordered; sequence LTMSPSRSVANSGLSDSLTTSTPRPSNGDSPSHPYHRT. Polar residues predominate over residues 312-339; sequence MSPSRSVANSGLSDSLTTSTPRPSNGDS. Phosphothreonine; by LKB1 is present on residues Thr329 and Thr419.

This sequence belongs to the protein kinase superfamily. STE Ser/Thr protein kinase family. STE20 subfamily. Component of a trimeric complex composed of STK11/LKB1, STRAD (STRADA or STRADB) and CAB39/MO25 (CAB39/MO25alpha or CAB39L/MO25beta): the complex tethers STK11/LKB1 in the cytoplasm and stimulates its catalytic activity.

It is found in the nucleus. The protein localises to the cytoplasm. Pseudokinase which, in complex with CAB39/MO25 (CAB39/MO25alpha or CAB39L/MO25beta), binds to and activates STK11/LKB1. Adopts a closed conformation typical of active protein kinases and binds STK11/LKB1 as a pseudosubstrate, promoting conformational change of STK11/LKB1 in an active conformation. In Homo sapiens (Human), this protein is STE20-related kinase adapter protein alpha (STRADA).